Here is a 471-residue protein sequence, read N- to C-terminus: GDP-mannose transporter (471 aa).

A compositionally biased stretch (polar residues) spans 1–13 (MSSGSRSFFTPQE). Residues 1-52 (MSSGSRSFFTPQETRLELPQGAAHQTPDITRPASPSENDRAPFLNGGPSDAR) form a disordered region. At 1-70 (MSSGSRSFFT…ALRNDSEKPA (70 aa)) the chain is on the cytoplasmic side. Residues 71–91 (VGIMALAPILCYCAASITMTV) form a helical membrane-spanning segment. At 92 to 101 (VNKFTVSGRG) the chain is on the lumenal side. A helical transmembrane segment spans residues 102-122 (FNMNLLVLLIQSTVGVTCVWI). At 123-139 (AERAGLIQLRGLNAKDA) the chain is on the cytoplasmic side. Residues 140-160 (WNWMPLSIMLVFVIWTGSKAL) form a helical membrane-spanning segment. Topologically, residues 161-166 (QYLNIS) are lumenal. Residue N164 is glycosylated (N-linked (GlcNAc...) asparagine). The chain crosses the membrane as a helical span at residues 167–187 (VYTIFKNLTIILIAYGEVMWF). Topologically, residues 188 to 193 (GGRVTR) are cytoplasmic. Residues 194-214 (IVLCSFLFMVLSSVIAAWSDI) traverse the membrane as a helical segment. Over 215–279 (SNVFAIGNLS…DVIEGFQGYG (65 aa)) the chain is Lumenal. An N-linked (GlcNAc...) asparagine glycan is attached at N222. Residues 280–300 (LLSSGYVWMALNCICSATYVL) traverse the membrane as a helical segment. At 301-315 (LMRKRIKVTGFKDWD) the chain is on the cytoplasmic side. Residues 316–336 (TMFYNNFLSIPVLLLMSFLVE) form a helical membrane-spanning segment. The Lumenal portion of the chain corresponds to 337 to 354 (DWSYANLHKNFPDDKQTK). Residues 355-375 (LISAIVFSGACAILISYTTAW) traverse the membrane as a helical segment. At 376 to 383 (CIRATSST) the chain is on the cytoplasmic side. A helical membrane pass occupies residues 384-404 (TYSMVGALNKLPVALSGMVFF). Topologically, residues 405–408 (HDPP) are lumenal. A helical transmembrane segment spans residues 409–429 (VTFSSVSAIAVGFFAGLVYAF). The Cytoplasmic portion of the chain corresponds to 430-471 (GKNKQAEAAKLGGHASANGSSSMSGSKDGSSLPMHTFNDRKD). A compositionally biased stretch (low complexity) spans 442 to 460 (GHASANGSSSMSGSKDGSS). The segment at 442 to 471 (GHASANGSSSMSGSKDGSSLPMHTFNDRKD) is disordered.

This sequence belongs to the TPT transporter family. SLC35D subfamily. As to quaternary structure, homooligomer.

It is found in the golgi apparatus membrane. It localises to the cytoplasmic vesicle membrane. Its subcellular location is the endoplasmic reticulum membrane. Its function is as follows. Involved in the import of GDP-mannose from the cytoplasm into the Golgi lumen. This is GDP-mannose transporter (VRG4) from Mycosarcoma maydis (Corn smut fungus).